A 238-amino-acid polypeptide reads, in one-letter code: Ribitol-5-phosphate cytidylyltransferase 2 (238 aa).

CTP-binding positions include 7-10 (LAGG) and 81-87 (GTDRNET).

Belongs to the IspD/TarI cytidylyltransferase family. TarI subfamily.

It carries out the reaction D-ribitol 5-phosphate + CTP + H(+) = CDP-L-ribitol + diphosphate. Its pathway is cell wall biogenesis; poly(ribitol phosphate) teichoic acid biosynthesis. Catalyzes the transfer of the cytidylyl group of CTP to D-ribitol 5-phosphate. In Staphylococcus aureus (strain MRSA252), this protein is Ribitol-5-phosphate cytidylyltransferase 2.